We begin with the raw amino-acid sequence, 355 residues long: MRRQLRSRRAPAFPYGYGYRLDDQDEVNQNYLADEEEEAEEARVMVVPDLEEEEKEEEEEKEEDEKEEEESHHQDTRSAWWQKLQIVNEYLWDPEKRMSLARTGQSLSLLLVIYFFFYASLAAVITLCMYTLFLTISPYVPTFTERVKPPGVMIRPFAHSLNFNFNVSEPDTWQHYVISLNGFLQGYNDSLQEEMNVDCPPGQYFIQDGDEDEDKKACQFKRSFLKNCSGLEDPTFGYSTGQPCILLKMNRIVGFRPELGDPVKVSCKVQRGDENDIRSISYYPESASFDLRYYPYYGKLTHVNYTSPLVAMHFTDVVKNQAVPVQCQLKGKGIINDVINDRFVGRVIFTLNIET.

The Nuclear segment spans residues 1-108 (MRRQLRSRRA…SLARTGQSLS (108 aa)). Residues 35-76 (EEEEAEEARVMVVPDLEEEEKEEEEEKEEDEKEEEESHHQDT) are disordered. Acidic residues predominate over residues 49–68 (DLEEEEKEEEEEKEEDEKEE). The helical; Signal-anchor for type II membrane protein transmembrane segment at 109-129 (LLLVIYFFFYASLAAVITLCM) threads the bilayer. Over 130-355 (YTLFLTISPY…RVIFTLNIET (226 aa)) the chain is Perinuclear space.

Belongs to the X(+)/potassium ATPases subunit beta family. In terms of assembly, associates with a SMAD7-transcriptional complex. Interacts with SNW1 and TOR1AIP1. Does not associate with known Na,K-ATPase alpha-subunits. As to expression, expressed in skeletal muscle (at protein level). Expressed during postnatal development in skeletal muscle and heart.

It is found in the nucleus inner membrane. In terms of biological role, may act as a transcriptional coregulator during muscle development through its interaction with SNW1. Has lost its ancestral function as a Na,K-ATPase beta-subunit. The sequence is that of Protein ATP1B4 (ATP1B4) from Sus scrofa (Pig).